The primary structure comprises 52 residues: MHESHLVVILALLLLALWCLSTRPVQPSCHVEINGHSIIVTGNCWHSTQRPH.

At 1-3 (MHE) the chain is on the lumenal side. Residues 4 to 21 (SHLVVILALLLLALWCLS) form a helical membrane-spanning segment. Over 22–52 (TRPVQPSCHVEINGHSIIVTGNCWHSTQRPH) the chain is Cytoplasmic.

The protein belongs to the Tymovirales TGBp3 protein family.

It is found in the host endoplasmic reticulum membrane. Plays a role in viral cell-to-cell propagation, by facilitating genome transport to neighboring plant cells through plasmosdesmata. May induce the formation of granular vesicles derived from the Endoplasmic reticulum, which align on actin filaments. The protein is Movement protein TGBp3 of Foxtail mosaic virus.